The primary structure comprises 220 residues: MTTLQISSSLFRSFLLVICVFVIPSLSSDSDPLQDFCVGDLKASPSINGFPCKSSVSASDFFFSGLGGPLNTSTPNGVAVSPANVLTFPGLNTLGLSMNNVEFAPGGVNPPHSHPRATEAGVVIEGSVFVGFLTTNNTLFSKVLNAGEMFVVPRGLVHFQWNVGKVKARLITSFNSQLPGSAVLPSTLFGSNPTIPNAVLTKTFRTDDVTVNKLKSKFAV.

A signal peptide spans Met-1–Ser-27. A disulfide bond links Cys-37 and Cys-52. One can recognise a Cupin type-1 domain in the interval Ser-64–Asn-212. Asn-71 is a glycosylation site (N-linked (GlcNAc...) asparagine). Mn(2+)-binding residues include His-112, His-114, and Glu-119. A glycan (N-linked (GlcNAc...) asparagine) is linked at Asn-136. His-158 contributes to the Mn(2+) binding site.

Belongs to the germin family. As to quaternary structure, oligomer (believed to be a pentamer but probably hexamer).

The protein resides in the secreted. It is found in the extracellular space. It localises to the apoplast. Its function is as follows. May play a role in plant defense. Probably has no oxalate oxidase activity even if the active site is conserved. In Arabidopsis thaliana (Mouse-ear cress), this protein is Germin-like protein subfamily T member 2.